A 262-amino-acid polypeptide reads, in one-letter code: Phosphatase SCO2771 (262 aa).

Displays phosphatase activity against p-nitrophenyl phosphate (pNPP) in vitro; however, the physiological substrate is unknown. The sequence is that of Phosphatase SCO2771 from Streptomyces coelicolor (strain ATCC BAA-471 / A3(2) / M145).